The primary structure comprises 1579 residues: MAP kinase kinase kinase SSK2 (1579 aa).

The interval 1-70 is disordered; sequence MSHSDYFNYK…HSTQYFRSPN (70 aa). The segment covering 21-44 has biased composition (low complexity); sequence SSKMRQSSSSSSSRLRSESLGRNS. Residues 45-67 are compositionally biased toward polar residues; the sequence is NTTQARVASSPISPGLHSTQYFR. Residues S57, S62, S78, and S118 each carry the phosphoserine modification. Disordered regions lie at residues 97–155 and 190–243; these read FFHQ…ESEI and SIMS…GSTT. Low complexity predominate over residues 104 to 118; it reads SGSSSSSARSSRRPS. The segment covering 127-139 has biased composition (polar residues); the sequence is NPQQSLPKLSTQP. Over residues 144–155 the composition is skewed to basic and acidic residues; that stretch reads KKVEASKTESEI. The residue at position 290 (S290) is a Phosphoserine. Residues 1266 to 1558 enclose the Protein kinase domain; sequence WQKRNFIGGG…AVELLMDPWI (293 aa). Residues 1272–1280 and K1295 each bind ATP; that span reads IGGGTFGRV. D1390 (proton acceptor) is an active-site residue. S1424 bears the Phosphoserine mark.

Belongs to the protein kinase superfamily. STE Ser/Thr protein kinase family. MAP kinase kinase kinase subfamily. Interacts with by SSK1.

It carries out the reaction L-seryl-[protein] + ATP = O-phospho-L-seryl-[protein] + ADP + H(+). It catalyses the reaction L-threonyl-[protein] + ATP = O-phospho-L-threonyl-[protein] + ADP + H(+). Functionally, kinase involved in a signal transduction pathway that is activated by changes in the osmolarity of the extracellular environment. Activates the PBS2 MAP kinase kinase by phosphorylation. The chain is MAP kinase kinase kinase SSK2 (SSK2) from Saccharomyces cerevisiae (strain ATCC 204508 / S288c) (Baker's yeast).